The primary structure comprises 403 residues: Phosphomevalonate dehydratase large subunit (403 aa).

(R)-5-phosphomevalonate is bound by residues glycine 48, valine 49, serine 50, asparagine 79, and proline 80. Cysteine 119 provides a ligand contact to [4Fe-4S] cluster. (R)-5-phosphomevalonate is bound by residues glutamate 138 and serine 139. Residues cysteine 301 and cysteine 358 each coordinate [4Fe-4S] cluster. Lysine 378 contacts (R)-5-phosphomevalonate.

This sequence belongs to the AcnX type II large subunit family. Heterodimer composed of a large subunit (PMDh-L) and a small subunit (PMDh-S). Requires [4Fe-4S] cluster as cofactor.

It carries out the reaction (R)-5-phosphomevalonate = (2E)-3-methyl-5-phosphooxypent-2-enoate + H2O. It participates in isoprenoid biosynthesis; isopentenyl diphosphate biosynthesis via mevalonate pathway. Functionally, component of a hydro-lyase that catalyzes the dehydration of mevalonate 5-phosphate (MVA5P) to form trans-anhydromevalonate 5-phosphate (tAHMP). Involved in the archaeal mevalonate (MVA) pathway, which provides fundamental precursors for isoprenoid biosynthesis, such as isopentenyl diphosphate (IPP) and dimethylallyl diphosphate (DMAPP). In Methanocaldococcus jannaschii (strain ATCC 43067 / DSM 2661 / JAL-1 / JCM 10045 / NBRC 100440) (Methanococcus jannaschii), this protein is Phosphomevalonate dehydratase large subunit.